The sequence spans 72 residues: PAMP-induced secreted peptide 1 (72 aa).

Residues 1–30 (MRRVSWSTVLIVVVMVSLFFVEHVVVPAAA) form the signal peptide. A 4-hydroxyproline mark is found at Pro-65 and Pro-67.

In terms of processing, contains 4-hydroxyproline; hydroxylated on Pro-65 and Pro-67. As to expression, expressed in guard cells, hydathodes, leaf trichomes, and vascular tissues of leaves and roots.

The protein localises to the secreted. Its subcellular location is the extracellular space. It is found in the apoplast. In terms of biological role, endogenous secreted peptide that acts as elicitor of immune response and positive regulator of defense response. Amplifies the immune response triggered by flg22, the active epitope of bacterial flagellin. Acts as a negative regulator of root growth. In Arabidopsis thaliana (Mouse-ear cress), this protein is PAMP-induced secreted peptide 1.